The chain runs to 306 residues: Pantothenate kinase (306 aa).

An ATP-binding site is contributed by 90-97 (GSVAVGKS).

The protein belongs to the prokaryotic pantothenate kinase family.

The protein resides in the cytoplasm. It carries out the reaction (R)-pantothenate + ATP = (R)-4'-phosphopantothenate + ADP + H(+). It functions in the pathway cofactor biosynthesis; coenzyme A biosynthesis; CoA from (R)-pantothenate: step 1/5. The chain is Pantothenate kinase from Lactococcus lactis subsp. cremoris (strain MG1363).